We begin with the raw amino-acid sequence, 203 residues long: Adenylyl-sulfate kinase (203 aa).

ATP is bound at residue 35–42 (GLSGSGKS). Ser-109 (phosphoserine intermediate) is an active-site residue.

The protein belongs to the APS kinase family.

The catalysed reaction is adenosine 5'-phosphosulfate + ATP = 3'-phosphoadenylyl sulfate + ADP + H(+). Its pathway is sulfur metabolism; hydrogen sulfide biosynthesis; sulfite from sulfate: step 2/3. In terms of biological role, catalyzes the synthesis of activated sulfate. In Geotalea daltonii (strain DSM 22248 / JCM 15807 / FRC-32) (Geobacter daltonii), this protein is Adenylyl-sulfate kinase.